Consider the following 590-residue polypeptide: MSDFWEKNKGSITSGLKKTGKVGLSGTKYVAKTGYQAGKKNWGGNKKDKQNKKQGEEDVDDELDEEPAHHASYPPRVVDPSYFPPPPSRTNPSQNVAGEHMPRQTYPAQPSIQQPVYQQPVYQQSAYPAQVPQQAPQPAPQQAQYVIQQPPPPPRNPGYQQLPSQQAYEEPAQYSYQQPPPQSGFQQPPQAGYQPTQQTYQPTQQTYQPTQQTYQRPAQPVPPPPSNQSPQQVIQQPPPPPRSGYQQSPPPQVGYQQPPPPPRAGYQQSPPPQFDYQQPPVQQHAHSGPLPPSRPSDQYLTPIQTQSTVHSQTRPYDLTAPHVKQRLEMQSVDLTNLPPPPTHRDRSSPPKSRESSPAGQSQKVHSGSTPPPTYESSQKDIESSMSSSSVTPSTQPALASRPSSISSQSRSNVPPPMPPKPNEPGMVDVSSFPPPPRPRPTPSMERETALKAQDPSTGPTPRGRLAGSKPPPPPVKPKPRNLAAGSGSGSGSLGSGNHTPLASVDSISQELSKVQLKKTNSKYTQEPTSSKLPPPAVPRKNFTPDKQGTPLPPNKNASLKSPTDQQDVNPFERYLKSAVPAENDRLHKPM.

The interval 1–571 (MSDFWEKNKG…PTDQQDVNPF (571 aa)) is disordered. The segment covering 45 to 56 (NKKDKQNKKQGE) has biased composition (basic and acidic residues). Composition is skewed to low complexity over residues 108–148 (AQPS…YVIQ) and 157–218 (PGYQ…QRPA). A compositionally biased stretch (pro residues) spans 236-273 (QPPPPPRSGYQQSPPPQVGYQQPPPPPRAGYQQSPPPQ). Polar residues-rich tracts occupy residues 275–285 (DYQQPPVQQHA) and 295–314 (PSDQYLTPIQTQSTVHSQTR). Residues 342–354 (THRDRSSPPKSRE) show a composition bias toward basic and acidic residues. The span at 358–368 (AGQSQKVHSGS) shows a compositional bias: polar residues. Low complexity-rich tracts occupy residues 383–393 (SSMSSSSVTPS) and 400–411 (SRPSSISSQSRS). Composition is skewed to pro residues over residues 413–422 (VPPPMPPKPN) and 432–441 (FPPPPRPRPT). Composition is skewed to polar residues over residues 497 to 514 (NHTPLASVDSISQELSKV), 521 to 531 (SKYTQEPTSSK), and 555 to 568 (KNASLKSPTDQQDV).

It belongs to the AIM3 family.

The protein resides in the membrane raft. This is Altered inheritance of mitochondria protein 3 (AIM3) from Zygosaccharomyces rouxii (strain ATCC 2623 / CBS 732 / NBRC 1130 / NCYC 568 / NRRL Y-229).